The sequence spans 466 residues: Arginine biosynthesis bifunctional protein ArgJ, mitochondrial (466 aa).

Substrate is bound by residues threonine 194, lysine 223, threonine 234, glutamate 321, asparagine 461, and threonine 466. Threonine 234 serves as the catalytic Nucleophile.

The protein belongs to the ArgJ family. In terms of assembly, heterodimer of an alpha and a beta chain. In terms of processing, the alpha and beta chains are autoproteolytically processed from a single precursor protein within the mitochondrion.

It is found in the mitochondrion matrix. It carries out the reaction N(2)-acetyl-L-ornithine + L-glutamate = N-acetyl-L-glutamate + L-ornithine. It catalyses the reaction L-glutamate + acetyl-CoA = N-acetyl-L-glutamate + CoA + H(+). The protein operates within amino-acid biosynthesis; L-arginine biosynthesis; L-ornithine and N-acetyl-L-glutamate from L-glutamate and N(2)-acetyl-L-ornithine (cyclic): step 1/1. It functions in the pathway amino-acid biosynthesis; L-arginine biosynthesis; N(2)-acetyl-L-ornithine from L-glutamate: step 1/4. Its function is as follows. Catalyzes two activities which are involved in the cyclic version of arginine biosynthesis: the synthesis of acetylglutamate from glutamate and acetyl-CoA, and of ornithine by transacetylation between acetylornithine and glutamate. The polypeptide is Arginine biosynthesis bifunctional protein ArgJ, mitochondrial (Aspergillus fumigatus (strain ATCC MYA-4609 / CBS 101355 / FGSC A1100 / Af293) (Neosartorya fumigata)).